A 25-amino-acid chain; its full sequence is Antimicrobial peptide THP3 (25 aa).

It localises to the secreted. In terms of biological role, bactericidal activity; inhibits Staphylococcus aureus. The chain is Antimicrobial peptide THP3 from Meleagris gallopavo (Wild turkey).